A 604-amino-acid chain; its full sequence is ATP-dependent RNA helicase DED1 (604 aa).

A compositionally biased stretch (polar residues) spans 1–19 (MAELSEQVQNLSINDNNEN). The disordered stretch occupies residues 1–55 (MAELSEQVQNLSINDNNENGYVPPHLRGKPRSARNNSSNYNNNNGGYNGGRGGGS). An N-acetylalanine modification is found at A2. Residues 34-45 (RNNSSNYNNNNG) show a composition bias toward low complexity. Residues 46 to 55 (GYNGGRGGGS) show a composition bias toward gly residues. R51 carries the omega-N-methylarginine modification. Dimethylated arginine; alternate is present on R62. At R62 the chain carries Omega-N-methylarginine; alternate. Positions 67-76 (NGGFFGGNNG) are enriched in gly residues. Positions 67–94 (NGGFFGGNNGGSRSNGRSGGRWIDGKHV) are disordered. The Q motif signature appears at 142-170 (TEFTSPPLDGLLLENIKLARFTKPTPVQK). Residue K158 forms a Glycyl lysine isopeptide (Lys-Gly) (interchain with G-Cter in ubiquitin) linkage. The region spanning 173-362 (VPIVANGRDL…RDFLSDYIFL (190 aa)) is the Helicase ATP-binding domain. Position 186 to 193 (186 to 193 (AQTGSGKT)) interacts with ATP. Phosphoserine is present on residues S215, S218, and S263. The DEAD box motif lies at 306-309 (DEAD). One can recognise a Helicase C-terminal domain in the interval 373–533 (NITQKVLYVE…EVPSFLKDAM (161 aa)). Residues 533–604 (MMSAPGSRSN…SGGSNNSSWW (72 aa)) form a disordered region. A phosphoserine mark is found at S535, S539, and S543. R545 carries the dimethylated arginine; alternate modification. R545 carries the omega-N-methylarginine; alternate modification. 2 positions are modified to phosphoserine: S572 and S576. At R578 the chain carries Omega-N-methylarginine. Over residues 584 to 604 (GSDSKSSGWGNSGGSNNSSWW) the composition is skewed to low complexity. S598 carries the post-translational modification Phosphoserine.

This sequence belongs to the DEAD box helicase family. DDX3/DED1 subfamily. In terms of assembly, interacts with the L-A virus GAG protein and the whole L-A virus particles.

Its subcellular location is the cytoplasm. The catalysed reaction is ATP + H2O = ADP + phosphate + H(+). ATP-binding RNA helicase involved in translation initiation. Remodels RNA in response to ADP and ATP concentrations by facilitating disruption, but also formation of RNA duplexes. Has weak ATP-dependent affinity for dsRNA, but strong ATP-dependent affinity for ssRNA. Acts as a virus host factor involved in the replication of the MBV and the L-A viruses by promoting the negative-strand RNA synthesis. May be involved in recognition of the preinitiation complex and DNA binding of the RNA polymerase III and play a role in mRNA splicing. This Saccharomyces cerevisiae (strain ATCC 204508 / S288c) (Baker's yeast) protein is ATP-dependent RNA helicase DED1.